Reading from the N-terminus, the 103-residue chain is Pyrimidine/purine nucleoside phosphorylase (103 aa).

The protein belongs to the nucleoside phosphorylase PpnP family.

The enzyme catalyses a purine D-ribonucleoside + phosphate = a purine nucleobase + alpha-D-ribose 1-phosphate. It catalyses the reaction adenosine + phosphate = alpha-D-ribose 1-phosphate + adenine. It carries out the reaction cytidine + phosphate = cytosine + alpha-D-ribose 1-phosphate. The catalysed reaction is guanosine + phosphate = alpha-D-ribose 1-phosphate + guanine. The enzyme catalyses inosine + phosphate = alpha-D-ribose 1-phosphate + hypoxanthine. It catalyses the reaction thymidine + phosphate = 2-deoxy-alpha-D-ribose 1-phosphate + thymine. It carries out the reaction uridine + phosphate = alpha-D-ribose 1-phosphate + uracil. The catalysed reaction is xanthosine + phosphate = alpha-D-ribose 1-phosphate + xanthine. Functionally, catalyzes the phosphorolysis of diverse nucleosides, yielding D-ribose 1-phosphate and the respective free bases. Can use uridine, adenosine, guanosine, cytidine, thymidine, inosine and xanthosine as substrates. Also catalyzes the reverse reactions. The chain is Pyrimidine/purine nucleoside phosphorylase from Dechloromonas aromatica (strain RCB).